The chain runs to 372 residues: D-alanine--D-alanine ligase (372 aa).

An ATP-grasp domain is found at K145–E349. Residue D176 to E231 coordinates ATP. Mg(2+) contacts are provided by D303, E316, and N318.

Belongs to the D-alanine--D-alanine ligase family. Mg(2+) serves as cofactor. It depends on Mn(2+) as a cofactor.

It localises to the cytoplasm. It catalyses the reaction 2 D-alanine + ATP = D-alanyl-D-alanine + ADP + phosphate + H(+). Its pathway is cell wall biogenesis; peptidoglycan biosynthesis. Cell wall formation. The polypeptide is D-alanine--D-alanine ligase (Coxiella burnetii (strain CbuK_Q154) (Coxiella burnetii (strain Q154))).